A 552-amino-acid polypeptide reads, in one-letter code: Glutamine--tRNA ligase (552 aa).

The 'HIGH' region motif lies at 34–44 (PEPNGYLHIGH). ATP is bound by residues 35-37 (EPN) and 41-47 (HIGHAKS). The L-glutamine site is built by Asp-67 and Tyr-212. Residues Thr-231, 261 to 262 (RL), and 269 to 271 (MSK) contribute to the ATP site. Residues 268-272 (LMSKR) carry the 'KMSKS' region motif.

The protein belongs to the class-I aminoacyl-tRNA synthetase family. As to quaternary structure, monomer.

The protein resides in the cytoplasm. The catalysed reaction is tRNA(Gln) + L-glutamine + ATP = L-glutaminyl-tRNA(Gln) + AMP + diphosphate. In Hamiltonella defensa subsp. Acyrthosiphon pisum (strain 5AT), this protein is Glutamine--tRNA ligase.